The chain runs to 791 residues: Probable potassium transporter 11 (791 aa).

The Cytoplasmic portion of the chain corresponds to 1–49 (MASLSESEGTNRGSMWELDQNLDQPMDEEASRLKNMYREKKFSSLLLLR). The chain crosses the membrane as a helical span at residues 50-70 (LAFQSLGVVFGDLGTSPLYVF). Topologically, residues 71-87 (YNAFPHGVDDEEDVIGA) are extracellular. The chain crosses the membrane as a helical span at residues 88-108 (LSLIIYTLTLIPLLKYVFVVL). Residues 109 to 175 (RANDNGQGGT…EAHAYKRNCL (67 aa)) lie on the Cytoplasmic side of the membrane. Residues 176-196 (LIVVLIGTCTAIGDGILTPAI) form a helical membrane-spanning segment. Residues 197 to 215 (SVLSASGGIKVQNPNMSTD) lie on the Extracellular side of the membrane. N-linked (GlcNAc...) asparagine glycosylation is present at asparagine 211. A helical membrane pass occupies residues 216–236 (VVVIVSVIILIGLFSMQHYGT). Residues 237 to 238 (DK) are Cytoplasmic-facing. A helical membrane pass occupies residues 239–259 (VGWLFAPIVLLWFILIGSVGA). The Extracellular segment spans residues 260–289 (LNIHKYKGSVLKAYNPVYIYRYFQRRNSDS). Residues 290-310 (WASLGGIMLSITGTEALFADL) traverse the membrane as a helical segment. The Cytoplasmic portion of the chain corresponds to 311–315 (CHFPV). A helical membrane pass occupies residues 316–338 (FAIQIAFTLIVFPCLLLAYTGQA). The Extracellular portion of the chain corresponds to 339 to 359 (AYIIAHKDHVADAFYRSIPDS). The helical transmembrane segment at 360–380 (IYWPAFVIATAAAIVASQATI) threads the bilayer. The Cytoplasmic segment spans residues 381–411 (SATYSIIKQALALGCFPRVKIVHTSKKFLGQ). A helical membrane pass occupies residues 412–432 (IYIPDINWVLLILCIAVTAGF). The Extracellular portion of the chain corresponds to 433–444 (KNQSQIGNAYGT). N-linked (GlcNAc...) asparagine glycosylation is present at asparagine 434. Residues 445-465 (AVVIVMLVTTFLMVPIMLLVW) form a helical membrane-spanning segment. Residues 466 to 468 (KSH) lie on the Cytoplasmic side of the membrane. Residues 469 to 489 (WILVVTFIVLSLMVEIPYFSA) traverse the membrane as a helical segment. Residues 490–496 (CLLKIDQ) lie on the Extracellular side of the membrane. A helical transmembrane segment spans residues 497–517 (GGWVPLVIATAFFIIMYVWHF). Over 518–791 (CTVKRYEFEM…LLNVGQIYYI (274 aa)) the chain is Cytoplasmic.

This sequence belongs to the HAK/KUP transporter (TC 2.A.72.3) family.

Its subcellular location is the membrane. High-affinity potassium transporter. In Oryza sativa subsp. japonica (Rice), this protein is Probable potassium transporter 11.